We begin with the raw amino-acid sequence, 859 residues long: Volume-regulated anion channel subunit LRRC8D (859 aa).

The Cytoplasmic portion of the chain corresponds to 1–22 (MFTLAEVASLNDIQPTYRILKP). A helical membrane pass occupies residues 23-48 (WWDVFMDYLAVVMLMVAIFAGTMQLT). Topologically, residues 49–164 (KDQVVCLPVL…YHLALPWYSK (116 aa)) are extracellular. Residues cysteine 54 and cysteine 355 are joined by a disulfide bond. The tract at residues 110-138 (IPLQATHPHAESTLPNQEAKKEKRDPTGR) is disordered. Residues 127–138 (EAKKEKRDPTGR) are compositionally biased toward basic and acidic residues. A helical transmembrane segment spans residues 165-183 (YFPYLALIHTIILMVSSNF). Over 184 to 309 (WFKYPKTCSK…EDSDLIYKLY (126 aa)) the chain is Cytoplasmic. Residues 222–252 (SEENKQRITGAQTLPKHVSTSSDEGSPSAST) are disordered. Polar residues predominate over residues 228–252 (RITGAQTLPKHVSTSSDEGSPSAST). 3 positions are modified to phosphoserine: serine 242, serine 243, and serine 247. A helical transmembrane segment spans residues 310–331 (VVQTLIKTAKFIFILCYTANFV). At 332-361 (NAISFEHVCKPKVEHLTGYEVFECTHNMAY) the chain is on the extracellular side. The chain crosses the membrane as a helical span at residues 362 to 387 (MLKKLLISYISIICVYGFICLYTLFW). Residues 388–859 (LFRIPLKEYS…DVNVPFANGI (472 aa)) are Cytoplasmic-facing. 13 LRR repeats span residues 515-535 (NLQE…AFSF), 539-560 (HLRC…VYLL), 562-583 (NLRE…IGLE), 590-610 (HLKI…ITDV), 613-633 (HLTK…NSLK), 637-658 (NVAE…IFSL), 660-681 (NLQE…ISFQ), 685-706 (RLTC…ITHV), 708-729 (NLES…VFSL), 731-752 (KLRC…IGLL), 754-775 (NLQH…LFKC), 777-798 (KLRT…ISQL), and 800-821 (QLTQ…LGQC).

Belongs to the LRRC8 family. Heterohexamer; oligomerizes with other LRRC8 proteins (LRRC8A, LRRC8B, LRRC8C and/or LRRC8E) to form a heterohexamer. In vivo, the subunit composition may depend primarily on expression levels, and heterooligomeric channels containing various proportions of the different LRRC8 proteins may coexist. As to expression, expressed in pancreatic beta cells. Also expressed in glucagon-secreting pancreatic alpha cells.

It localises to the cell membrane. Its subcellular location is the endoplasmic reticulum membrane. The catalysed reaction is chloride(in) = chloride(out). It carries out the reaction iodide(out) = iodide(in). The enzyme catalyses taurine(out) = taurine(in). Non-essential component of the volume-regulated anion channel (VRAC, also named VSOAC channel), an anion channel required to maintain a constant cell volume in response to extracellular or intracellular osmotic changes. The VRAC channel conducts iodide better than chloride and can also conduct organic osmolytes like taurine. Plays a redundant role in the efflux of amino acids, such as aspartate, in response to osmotic stress family member (LRRC8B, LRRC8C, LRRC8D or LRRC8E); channel characteristics depend on the precise subunit composition. Also acts as a regulator of glucose-sensing in pancreatic beta cells: VRAC currents, generated in response to hypotonicity- or glucose-induced beta cell swelling, depolarize cells, thereby causing electrical excitation, leading to increase glucose sensitivity and insulin secretion. VRAC channels containing LRRC8D inhibit transport of immunoreactive cyclic dinucleotide GMP-AMP (2'-3'-cGAMP), an immune messenger produced in response to DNA virus in the cytosol. This chain is Volume-regulated anion channel subunit LRRC8D, found in Mus musculus (Mouse).